A 213-amino-acid chain; its full sequence is N-(5'-phosphoribosyl)anthranilate isomerase (213 aa).

The protein belongs to the TrpF family.

It carries out the reaction N-(5-phospho-beta-D-ribosyl)anthranilate = 1-(2-carboxyphenylamino)-1-deoxy-D-ribulose 5-phosphate. The protein operates within amino-acid biosynthesis; L-tryptophan biosynthesis; L-tryptophan from chorismate: step 3/5. The polypeptide is N-(5'-phosphoribosyl)anthranilate isomerase (Roseiflexus sp. (strain RS-1)).